The primary structure comprises 196 residues: Glycerol-3-phosphate acyltransferase (196 aa).

6 helical membrane passes run V5–C25, F53–A73, P80–F100, G107–L127, W130–I150, and F153–L173.

Belongs to the PlsY family. Probably interacts with PlsX.

Its subcellular location is the cell inner membrane. It catalyses the reaction an acyl phosphate + sn-glycerol 3-phosphate = a 1-acyl-sn-glycero-3-phosphate + phosphate. Its pathway is lipid metabolism; phospholipid metabolism. Its function is as follows. Catalyzes the transfer of an acyl group from acyl-phosphate (acyl-PO(4)) to glycerol-3-phosphate (G3P) to form lysophosphatidic acid (LPA). This enzyme utilizes acyl-phosphate as fatty acyl donor, but not acyl-CoA or acyl-ACP. In Actinobacillus pleuropneumoniae serotype 7 (strain AP76), this protein is Glycerol-3-phosphate acyltransferase.